Here is a 339-residue protein sequence, read N- to C-terminus: N-acetylmuramate/N-acetylglucosamine kinase (339 aa).

This sequence belongs to the kinase AmgK family.

It catalyses the reaction N-acetyl-D-muramate + ATP = N-acetyl-alpha-D-muramate 1-phosphate + ADP + H(+). The enzyme catalyses N-acetyl-D-glucosamine + ATP = N-acetyl-alpha-D-glucosamine 1-phosphate + ADP + H(+). It participates in cell wall biogenesis; peptidoglycan recycling. Functionally, sugar kinase that catalyzes the ATP-dependent phosphorylation of N-acetylmuramate (MurNAc) and N-acetylglucosamine (GlcNAc) at its C1 hydroxyl group, leading to MurNAc alpha-1P and GlcNAc alpha-1P, respectively. Is involved in peptidoglycan recycling as part of a cell wall recycling pathway that bypasses de novo biosynthesis of the peptidoglycan precursor UDP-MurNAc. Plays a role in intrinsic resistance to fosfomycin, which targets the de novo synthesis of UDP-MurNAc. Is also able to use N-acetylgalactosamine (GalNAc) as a substrate, but not N-acetylmannosamine, N-deacetylated sugars or glucose. The chain is N-acetylmuramate/N-acetylglucosamine kinase from Pseudomonas putida (strain ATCC 47054 / DSM 6125 / CFBP 8728 / NCIMB 11950 / KT2440).